Here is a 222-residue protein sequence, read N- to C-terminus: Non-structural protein V (222 aa).

The segment at 61–107 (ESTNHQKGSVGGGAKPKKPRPKIAIVPADDKTVPGKPIPNPLLGLDS) is disordered. Residues His171, Cys190, Cys194, Cys206, Cys208, Cys211, Cys215, and Cys218 each coordinate Zn(2+).

The protein belongs to the paramyxoviruses V protein family. In terms of assembly, interacts with host DDB1, STAT2 and IFIH1/MDA5. Interacts with host RIGI regulatory protein (via CARDs domain) and host TRIM25 (via SPRY domain); these interactions prevent TRIM25-mediated ubiquitination of RIG-I and disrupts downstream RIG-I signaling.

It localises to the host cytoplasm. Functionally, plays an essential role in the inhibition of host immune response. Prevents the establishment of cellular antiviral state by blocking interferon-alpha/beta (IFN-alpha/beta) production and signaling pathway. Interacts with host IFIH1/MDA5 and DHX58/LGP2 to inhibit the transduction pathway involved in the activation of IFN-beta promoter, thus protecting the virus against cell antiviral state. Efficiently blocks type I IFN signaling following infection by behaving as a substrate receptor for CUL4-DDB1 E3 ligase complex and targeting host STAT1 for proteasomal degradation. Blocks the type I interferon signaling pathway by disrupting the RIG-I signaling pathway. This is Non-structural protein V (P/V) from Parainfluenza virus 5 (strain W3) (PIV5).